Consider the following 330-residue polypeptide: 4-hydroxythreonine-4-phosphate dehydrogenase (330 aa).

Residues histidine 136 and threonine 137 each contribute to the substrate site. Positions 166, 211, and 266 each coordinate a divalent metal cation. Lysine 274, asparagine 283, and arginine 292 together coordinate substrate.

It belongs to the PdxA family. Homodimer. The cofactor is Zn(2+). Mg(2+) is required as a cofactor. It depends on Co(2+) as a cofactor.

It is found in the cytoplasm. The enzyme catalyses 4-(phosphooxy)-L-threonine + NAD(+) = 3-amino-2-oxopropyl phosphate + CO2 + NADH. The protein operates within cofactor biosynthesis; pyridoxine 5'-phosphate biosynthesis; pyridoxine 5'-phosphate from D-erythrose 4-phosphate: step 4/5. Its function is as follows. Catalyzes the NAD(P)-dependent oxidation of 4-(phosphooxy)-L-threonine (HTP) into 2-amino-3-oxo-4-(phosphooxy)butyric acid which spontaneously decarboxylates to form 3-amino-2-oxopropyl phosphate (AHAP). This chain is 4-hydroxythreonine-4-phosphate dehydrogenase, found in Erwinia tasmaniensis (strain DSM 17950 / CFBP 7177 / CIP 109463 / NCPPB 4357 / Et1/99).